A 203-amino-acid chain; its full sequence is Ribosomal RNA large subunit methyltransferase E (203 aa).

Positions 51, 53, 69, 85, and 109 each coordinate S-adenosyl-L-methionine. The active-site Proton acceptor is the Lys149.

It belongs to the class I-like SAM-binding methyltransferase superfamily. RNA methyltransferase RlmE family.

The protein localises to the cytoplasm. It catalyses the reaction uridine(2552) in 23S rRNA + S-adenosyl-L-methionine = 2'-O-methyluridine(2552) in 23S rRNA + S-adenosyl-L-homocysteine + H(+). Functionally, specifically methylates the uridine in position 2552 of 23S rRNA at the 2'-O position of the ribose in the fully assembled 50S ribosomal subunit. The polypeptide is Ribosomal RNA large subunit methyltransferase E (Methanoculleus marisnigri (strain ATCC 35101 / DSM 1498 / JR1)).